The primary structure comprises 237 residues: tRNA (guanine-N(7)-)-methyltransferase (237 aa).

Residues glutamate 67, glutamate 92, aspartate 119, and aspartate 142 each contribute to the S-adenosyl-L-methionine site. The active site involves aspartate 142. Substrate-binding positions include lysine 146, aspartate 178, and 215 to 218; that span reads TKFE.

Belongs to the class I-like SAM-binding methyltransferase superfamily. TrmB family.

It catalyses the reaction guanosine(46) in tRNA + S-adenosyl-L-methionine = N(7)-methylguanosine(46) in tRNA + S-adenosyl-L-homocysteine. It participates in tRNA modification; N(7)-methylguanine-tRNA biosynthesis. Catalyzes the formation of N(7)-methylguanine at position 46 (m7G46) in tRNA. The chain is tRNA (guanine-N(7)-)-methyltransferase from Aeromonas hydrophila subsp. hydrophila (strain ATCC 7966 / DSM 30187 / BCRC 13018 / CCUG 14551 / JCM 1027 / KCTC 2358 / NCIMB 9240 / NCTC 8049).